Here is a 323-residue protein sequence, read N- to C-terminus: Elongation factor P--(R)-beta-lysine ligase (323 aa).

74 to 76 (SPE) serves as a coordination point for substrate. ATP is bound by residues 98–100 (RNE) and asparagine 107. A substrate-binding site is contributed by tyrosine 116. 242-243 (EL) contacts ATP. Glutamate 249 is a binding site for substrate. An ATP-binding site is contributed by glycine 298.

This sequence belongs to the class-II aminoacyl-tRNA synthetase family. EpmA subfamily. In terms of assembly, homodimer.

It catalyses the reaction D-beta-lysine + L-lysyl-[protein] + ATP = N(6)-((3R)-3,6-diaminohexanoyl)-L-lysyl-[protein] + AMP + diphosphate + H(+). Functionally, with EpmB is involved in the beta-lysylation step of the post-translational modification of translation elongation factor P (EF-P). Catalyzes the ATP-dependent activation of (R)-beta-lysine produced by EpmB, forming a lysyl-adenylate, from which the beta-lysyl moiety is then transferred to the epsilon-amino group of a conserved specific lysine residue in EF-P. The polypeptide is Elongation factor P--(R)-beta-lysine ligase (Vibrio campbellii (strain ATCC BAA-1116)).